Reading from the N-terminus, the 88-residue chain is Small ribosomal subunit protein bS16 (88 aa).

It belongs to the bacterial ribosomal protein bS16 family.

This is Small ribosomal subunit protein bS16 from Anaeromyxobacter sp. (strain Fw109-5).